We begin with the raw amino-acid sequence, 137 residues long: Small ribosomal subunit protein uS12 (137 aa).

Belongs to the universal ribosomal protein uS12 family. As to quaternary structure, part of the 30S ribosomal subunit. Contacts proteins S8 and S17. May interact with IF1 in the 30S initiation complex.

Functionally, with S4 and S5 plays an important role in translational accuracy. In terms of biological role, interacts with and stabilizes bases of the 16S rRNA that are involved in tRNA selection in the A site and with the mRNA backbone. Located at the interface of the 30S and 50S subunits, it traverses the body of the 30S subunit contacting proteins on the other side and probably holding the rRNA structure together. The combined cluster of proteins S8, S12 and S17 appears to hold together the shoulder and platform of the 30S subunit. The sequence is that of Small ribosomal subunit protein uS12 from Lactiplantibacillus plantarum (strain ATCC BAA-793 / NCIMB 8826 / WCFS1) (Lactobacillus plantarum).